The sequence spans 148 residues: Single-stranded DNA-binding protein, mitochondrial (148 aa).

Residues 1-16 (MFRRPVVQVLRQFVRH) constitute a mitochondrion transit peptide. An SSB domain is found at 30 to 141 (LNRVQLLGRV…IIADNIIFLS (112 aa)). Ser67 and Ser79 each carry phosphoserine. Lys113 carries the N6-acetyllysine modification. Lys122 carries the N6-succinyllysine modification.

As to quaternary structure, homotetramer. Interacts with MPG/AAG, through inhibition of its glycosylase activity it potentially prevents formation of DNA breaks in ssDNA, ensuring that base removal primarily occurs in dsDNA. Interacts with POLDIP2. Interacts with PRIMPOL.

The protein resides in the mitochondrion. It localises to the mitochondrion matrix. It is found in the mitochondrion nucleoid. Functionally, binds preferentially and cooperatively to pyrimidine rich single-stranded DNA (ss-DNA). In vitro, required to maintain the copy number of mitochondrial DNA (mtDNA) and plays a crucial role during mtDNA replication by stimulating the activity of the replisome components POLG and TWNK at the replication fork. Promotes the activity of the gamma complex polymerase POLG, largely by organizing the template DNA and eliminating secondary structures to favor ss-DNA conformations that facilitate POLG activity. In addition it is able to promote the 5'-3' unwinding activity of the mtDNA helicase TWNK. May also function in mtDNA repair. In Bos taurus (Bovine), this protein is Single-stranded DNA-binding protein, mitochondrial (SSBP1).